We begin with the raw amino-acid sequence, 281 residues long: Putative glutamine amidotransferase-like protein RP404 (281 aa).

One can recognise a Glutamine amidotransferase type-1 domain in the interval 19-281 (KYTYADFPWY…KALVKASKYI (263 aa)). Residues 139–174 (RHFSKLTYSKKFECNTEAFATTVYTLPIKLEFENAP) enclose the RPE1 insert domain.

This Rickettsia prowazekii (strain Madrid E) protein is Putative glutamine amidotransferase-like protein RP404.